A 484-amino-acid chain; its full sequence is D-aminoacylase (484 aa).

It belongs to the metallo-dependent hydrolases superfamily. N-acyl-D-amino-acid deacylase family. Zn(2+) serves as cofactor.

The protein resides in the cytoplasm. The enzyme catalyses an N-acyl-D-amino acid + H2O = a D-alpha-amino acid + a carboxylate. Its function is as follows. Has a wide specificity; hydrolyzes N-acyl derivative of neutral D-amino acids. The protein is D-aminoacylase (dan) of Alcaligenes xylosoxydans xylosoxydans (Achromobacter xylosoxidans).